The primary structure comprises 900 residues: Alanine--tRNA ligase (900 aa).

Residues His567, His571, Cys671, and His675 each contribute to the Zn(2+) site.

Belongs to the class-II aminoacyl-tRNA synthetase family. The cofactor is Zn(2+).

The protein resides in the cytoplasm. The enzyme catalyses tRNA(Ala) + L-alanine + ATP = L-alanyl-tRNA(Ala) + AMP + diphosphate. Its function is as follows. Catalyzes the attachment of alanine to tRNA(Ala) in a two-step reaction: alanine is first activated by ATP to form Ala-AMP and then transferred to the acceptor end of tRNA(Ala). Also edits incorrectly charged Ser-tRNA(Ala) and Gly-tRNA(Ala) via its editing domain. The polypeptide is Alanine--tRNA ligase (Mycoplasma pneumoniae (strain ATCC 29342 / M129 / Subtype 1) (Mycoplasmoides pneumoniae)).